We begin with the raw amino-acid sequence, 545 residues long: Tripartite motif-containing protein 26 (545 aa).

The RING-type zinc-finger motif lies at 16–57 (CSICLDYLRDPVTIDCGHVFCRSCTSDIRPISGNRPVCPLCK). The segment at 97–138 (QDMKLCERHQEKLHYYCEDDGKLLCVMCRESREHRPHTAVLV) adopts a B box-type zinc-finger fold. Zn(2+)-binding residues include cysteine 102, histidine 105, cysteine 124, and histidine 130. Residues 197 to 243 (QFLKKREQHLLDQLATLEQLLTEGREKFKTRGVSELDRLTLVISELE) adopt a coiled-coil conformation. One can recognise a B30.2/SPRY domain in the interval 301–545 (RGLRQFQGKL…WPGARLLLRP (245 aa)). The segment at 382–443 (REGWSEDEEE…EEEEEVQESC (62 aa)) is disordered. Residues 386-440 (SEDEEEGEEEEEGEEEEEDEEVGYGDGYEDWETDEEDESLGEEEEEEEEEEEEVQ) are compositionally biased toward acidic residues.

This sequence belongs to the TRIM/RBCC family. In terms of assembly, interacts with TBK1; this interaction bridges together TBK1 and NEMO in order to activate TBK1. Interacts with INCA1. In terms of processing, autoubiquitinates upon viral infection. In turn, autoubiquitinated TRIM26 recruits NEMO and bridges TBK1-NEMO interaction.

It is found in the cytoplasm. It localises to the nucleus. It catalyses the reaction S-ubiquitinyl-[E2 ubiquitin-conjugating enzyme]-L-cysteine + [acceptor protein]-L-lysine = [E2 ubiquitin-conjugating enzyme]-L-cysteine + N(6)-ubiquitinyl-[acceptor protein]-L-lysine.. In terms of biological role, E3 ubiquitin-protein ligase which regulates the IFN-beta production and antiviral response downstream of various DNA-encoded pattern-recognition receptors (PRRs). Also plays a central role in determining the response to different forms of oxidative stress by controlling levels of DNA glycosylases NEIL1, NEIL3 and NTH1 that are involved in repair of damaged DNA. Promotes nuclear IRF3 ubiquitination and proteasomal degradation. Bridges together TBK1 and NEMO during the innate response to viral infection leading to the activation of TBK1. Positively regulates LPS-mediated inflammatory innate immune response by catalyzing the 'Lys-11'-linked polyubiquitination of TAB1 to enhance its activation and subsequent NF-kappa-B and MAPK signaling. In a manner independent of its catalytic activity, inhibits WWP2, a SOX2-directed E3 ubiquitin ligase, and thus protects SOX2 from polyubiquitination and proteasomal degradation. Ubiquitinates the histone acetyltransferase protein complex component PHF20 and thereby triggers its degradation in the nucleus after its recruitment by the histone demethylase KDM6B, serving as a scaffold protein. Upon induction by TGF-beta, ubiquitinates the TFIID component TAF7 for proteasomal degradation. Induces ferroptosis by ubiquitinating SLC7A11, a critical protein for lipid reactive oxygen species (ROS) scavenging. This Mus musculus (Mouse) protein is Tripartite motif-containing protein 26 (Trim26).